Here is a 793-residue protein sequence, read N- to C-terminus: MIITRKWLEKYLDLSNITNEQISVCLNSLGFEVEQEIDYSKLNTKLVIGHIEESDPIEGTKLKKTKTRIGENKYATILSTSRNIEEDKFAIVALPGAKLANGLELENREILGILSEGMFCGFNEIGLPNSVLTEDEQQDVYYIDSIYKNMDEMVGREISEVLNFDDYTFEVDLTLNRSDALAAKQLVKEIANYFDLKINNNEHKVKFEKPTESITIDLNKKVEDEVNTVSHTFIGLKNTNTPFDSSHDVWLKHSNVKSAQNKFENIANMATLISGQPFILIDADKVNGELTLTKQTIDEKELIVLKSGNSIVNILGLKTEDKFKVTEETVTMLVVMLNLDQISMRKQQRNLNVSTVDTQRYAKPLNPNLYDQGIDELVSILDEYKMLEDVQKVVTTVQKQNYDNVYSITLEKVQDILGIEITVEEIISLFRTLDIEISVKKSELTFTVDKNRTDLYGKNDLCEEIARLYGYDNIIEQPLEYVSFKKTKNLDKKLKDKLSDYLVGAGFNNIKTYSLTDIESNKTWNLFKVKDPVVLMSPLSIQRETFRNNLSKSMIDTIIFNANNGNKSVKFFEMADIFALNGFRQSNLCFGVSGEAITDSLSQVHIKSNYAYISSILMSVLDLYKVDVTNVTFEVNDKAIDEIHPYINATVKYKNKKIGFIYKLNPAFEQANKIYPTFICEVNLNLLLEIADKVHVTSEISKFQKSTRDISFELSNDVNFDTIVKAMLKDLNYLTNYKVIDKYSDEQMDKENISSLTVKLSFNSLDHQLTEKEINDDFEKILNNLKELKVKVR.

A tRNA-binding domain is found at S40 to S159. The B5 domain occupies N401–E476. 4 residues coordinate Mg(2+): D454, D460, E463, and E464. The 93-residue stretch at S701–R793 folds into the FDX-ACB domain.

This sequence belongs to the phenylalanyl-tRNA synthetase beta subunit family. Type 1 subfamily. As to quaternary structure, tetramer of two alpha and two beta subunits. Mg(2+) serves as cofactor.

The protein localises to the cytoplasm. The enzyme catalyses tRNA(Phe) + L-phenylalanine + ATP = L-phenylalanyl-tRNA(Phe) + AMP + diphosphate + H(+). The polypeptide is Phenylalanine--tRNA ligase beta subunit (Mesoplasma florum (strain ATCC 33453 / NBRC 100688 / NCTC 11704 / L1) (Acholeplasma florum)).